A 404-amino-acid chain; its full sequence is Argininosuccinate synthase (404 aa).

9-17 is a binding site for ATP; it reads AYSGGLDTS. Tyrosine 86 is a binding site for L-citrulline. Position 116 (glycine 116) interacts with ATP. Positions 118, 122, and 123 each coordinate L-aspartate. Asparagine 122 is a binding site for L-citrulline. L-citrulline is bound by residues arginine 126, serine 174, serine 183, glutamate 259, and tyrosine 271.

Belongs to the argininosuccinate synthase family. Type 1 subfamily. Homotetramer.

The protein localises to the cytoplasm. It carries out the reaction L-citrulline + L-aspartate + ATP = 2-(N(omega)-L-arginino)succinate + AMP + diphosphate + H(+). Its pathway is amino-acid biosynthesis; L-arginine biosynthesis; L-arginine from L-ornithine and carbamoyl phosphate: step 2/3. The chain is Argininosuccinate synthase from Listeria welshimeri serovar 6b (strain ATCC 35897 / DSM 20650 / CCUG 15529 / CIP 8149 / NCTC 11857 / SLCC 5334 / V8).